Consider the following 139-residue polypeptide: Ribulose bisphosphate carboxylase small subunit (139 aa).

The protein belongs to the RuBisCO small chain family. In terms of assembly, heterohexadecamer of 8 large and 8 small subunits.

It is found in the plastid. The protein resides in the chloroplast. RuBisCO catalyzes two reactions: the carboxylation of D-ribulose 1,5-bisphosphate, the primary event in carbon dioxide fixation, as well as the oxidative fragmentation of the pentose substrate in the photorespiration process. Both reactions occur simultaneously and in competition at the same active site. Although the small subunit is not catalytic it is essential for maximal activity. In Detonula confervacea (Marine diatom), this protein is Ribulose bisphosphate carboxylase small subunit.